A 198-amino-acid chain; its full sequence is ATP-dependent Clp protease proteolytic subunit (198 aa).

S102 serves as the catalytic Nucleophile. The active site involves H127.

The protein belongs to the peptidase S14 family. Fourteen ClpP subunits assemble into 2 heptameric rings which stack back to back to give a disk-like structure with a central cavity, resembling the structure of eukaryotic proteasomes.

The protein localises to the cytoplasm. It catalyses the reaction Hydrolysis of proteins to small peptides in the presence of ATP and magnesium. alpha-casein is the usual test substrate. In the absence of ATP, only oligopeptides shorter than five residues are hydrolyzed (such as succinyl-Leu-Tyr-|-NHMec, and Leu-Tyr-Leu-|-Tyr-Trp, in which cleavage of the -Tyr-|-Leu- and -Tyr-|-Trp bonds also occurs).. In terms of biological role, cleaves peptides in various proteins in a process that requires ATP hydrolysis. Has a chymotrypsin-like activity. Plays a major role in the degradation of misfolded proteins. This is ATP-dependent Clp protease proteolytic subunit from Brachyspira hyodysenteriae (strain ATCC 49526 / WA1).